We begin with the raw amino-acid sequence, 38 residues long: Antimicrobial peptide 1 (38 aa).

Disulfide bonds. As to expression, expressed in flowers but not in leaves, seeds or roots (at protein level).

In terms of biological role, antimicrobial peptide. Active against fungal species B.cinerea (IC(50)=5.8 uM) and A.niger (IC(50)=5.6 uM) but not against F.oxysporum, F.graminearum, B.sorokinina and P.debaryanum at concentrations below 10 uM. Active against bacterial species P.syringae, B.subtilis and X.campestris. In Taraxacum officinale (Common dandelion), this protein is Antimicrobial peptide 1.